A 313-amino-acid chain; its full sequence is Cytochrome c biogenesis protein CcsA (313 aa).

8 helical membrane-spanning segments follow: residues 9–29 (ILTH…LITL), 44–64 (GIIV…ISSG), 71–91 (LYES…IPYF), 101–121 (IIGP…LTEI), 143–163 (MILG…LLVI), 217–237 (VISL…VWAN), 244–264 (WNWD…AIYL), and 278–298 (AIVA…VNLL).

Belongs to the CcmF/CycK/Ccl1/NrfE/CcsA family. In terms of assembly, may interact with Ccs1.

It is found in the plastid. The protein resides in the chloroplast thylakoid membrane. In terms of biological role, required during biogenesis of c-type cytochromes (cytochrome c6 and cytochrome f) at the step of heme attachment. This chain is Cytochrome c biogenesis protein CcsA, found in Nicotiana tomentosiformis (Tobacco).